Here is a 631-residue protein sequence, read N- to C-terminus: RNA polymerase sigma factor RpoD (631 aa).

Residues 395 to 465 form a sigma-70 factor domain-2 region; it reads LIKANLRLVV…TRSISDQART (71 aa). The Interaction with polymerase core subunit RpoC motif lies at 419-422; it reads DLVQ. A sigma-70 factor domain-3 region spans residues 474-550; it reads EQINRLNRET…DKAIKNPANH (77 aa). Residues 563–616 are sigma-70 factor domain-4; it reads ILGTLPEREQEVVKMRFGLEDGYSLTLEEVGLHFNVTRERIRQIESKALRRLKN. The segment at residues 589-608 is a DNA-binding region (H-T-H motif); that stretch reads LEEVGLHFNVTRERIRQIES.

Belongs to the sigma-70 factor family. RpoD/SigA subfamily. As to quaternary structure, interacts transiently with the RNA polymerase catalytic core.

It is found in the cytoplasm. Functionally, sigma factors are initiation factors that promote the attachment of RNA polymerase to specific initiation sites and are then released. This sigma factor is the primary sigma factor during exponential growth. This chain is RNA polymerase sigma factor RpoD, found in Borreliella burgdorferi (strain ATCC 35210 / DSM 4680 / CIP 102532 / B31) (Borrelia burgdorferi).